A 311-amino-acid polypeptide reads, in one-letter code: Protoheme IX farnesyltransferase (311 aa).

Transmembrane regions (helical) follow at residues 32-52, 53-73, 104-124, 125-145, 153-173, 180-200, 224-244, 245-265, and 285-305; these read VMSLVVFTALVGLMVSPVPIN, PWYGFLAIICIAVGGGGAGAL, FIFGMVLSLLSVLVMGSFINW, FAAFFLAFTIFFYVVIYTIWL, IVIGGASGAFPPMIGWAVTTG, FLLFLIIFMWTPPHFWALSLF, KQILFYTVLMVLCATAPCFTG, LGGVFYGIFSTILGIIFIYFA, and FFFSLLYLAAVFGALLIESLV.

This sequence belongs to the UbiA prenyltransferase family. Protoheme IX farnesyltransferase subfamily.

It is found in the cell inner membrane. It catalyses the reaction heme b + (2E,6E)-farnesyl diphosphate + H2O = Fe(II)-heme o + diphosphate. The protein operates within porphyrin-containing compound metabolism; heme O biosynthesis; heme O from protoheme: step 1/1. In terms of biological role, converts heme B (protoheme IX) to heme O by substitution of the vinyl group on carbon 2 of heme B porphyrin ring with a hydroxyethyl farnesyl side group. The chain is Protoheme IX farnesyltransferase from Bartonella tribocorum (strain CIP 105476 / IBS 506).